The following is a 213-amino-acid chain: AN1-type zinc finger protein 5 (213 aa).

An A20-type zinc finger spans residues 8–42 (TPGPMLCSTGCGFYGNPRTNGMCSVCYKEHLQRQQ). The Zn(2+) site is built by C14, C18, C30, and C33. The interval 39 to 149 (QRQQNSGRMS…EEKAPELPKP (111 aa)) is disordered. Residues 40–66 (RQQNSGRMSPMGTASGSNSPTSDSASV) show a composition bias toward polar residues. S48 and S58 each carry phosphoserine. Residues 120-138 (SEPVVTQPSPSVSQPSSSQ) show a composition bias toward low complexity. The segment covering 139–148 (SEEKAPELPK) has biased composition (basic and acidic residues). Residues 148–194 (KPKKNRCFMCRKKVGLTGFDCRCGNLFCGLHRYSDKHNCPYDYKAEA) form an AN1-type zinc finger. Zn(2+) contacts are provided by C154, C157, C168, C170, C175, H178, H184, and C186. N6-acetyllysine is present on K209.

As to quaternary structure, homooligomer and/or heterooligomer. Interacts (via A20-type domain) with IKBKG and RIPK1 and with TRAF6 (via AN1-type domain). Interacts with ubiquitin and polyubiquitinated proteins. Identified in a heterotrimeric complex with ubiquitin and SQSTM1, where ZFAND5 and SQSTM1 both interact with the same ubiquitin molecule.

It is found in the cytoplasm. Its function is as follows. Involved in protein degradation via the ubiquitin-proteasome system. May act by anchoring ubiquitinated proteins to the proteasome. Plays a role in ubiquitin-mediated protein degradation during muscle atrophy. Plays a role in the regulation of NF-kappa-B activation and apoptosis. Inhibits NF-kappa-B activation triggered by overexpression of RIPK1 and TRAF6 but not of RELA. Also inhibits tumor necrosis factor (TNF), IL-1 and TLR4-induced NF-kappa-B activation in a dose-dependent manner. Overexpression sensitizes cells to TNF-induced apoptosis. Is a potent inhibitory factor for osteoclast differentiation. In Rattus norvegicus (Rat), this protein is AN1-type zinc finger protein 5 (Zfand5).